Consider the following 274-residue polypeptide: Bis(5'-nucleosyl)-tetraphosphatase, symmetrical (274 aa).

The protein belongs to the Ap4A hydrolase family.

It carries out the reaction P(1),P(4)-bis(5'-adenosyl) tetraphosphate + H2O = 2 ADP + 2 H(+). Its function is as follows. Hydrolyzes diadenosine 5',5'''-P1,P4-tetraphosphate to yield ADP. This chain is Bis(5'-nucleosyl)-tetraphosphatase, symmetrical, found in Shewanella putrefaciens (strain CN-32 / ATCC BAA-453).